Consider the following 876-residue polypeptide: Radial spoke head 10 homolog B (876 aa).

Residues Met1 to Ala16 show a composition bias toward basic and acidic residues. Positions Met1–Thr71 are disordered. Positions Arg17 to Lys37 are enriched in polar residues. Positions Glu39–Glu50 are enriched in low complexity. 10 MORN repeats span residues Tyr86 to Thr108, Tyr109 to Gly129, Tyr132 to Thr154, Tyr155 to Cys172, Tyr179 to Tyr196, Tyr204 to Asn225, Tyr227 to Trp244, Tyr251 to Trp268, Tyr284 to Ala305, and Tyr307 to His328. Residues Trp356–Ser372 show a composition bias toward polar residues. Positions Trp356–Ser386 are disordered. Residues Arg375–Ser386 show a composition bias toward basic and acidic residues. Positions Leu790–Phe832 form a coiled coil. A disordered region spans residues Leu839–Lys876.

Interacts with RSPH6A. Does not appear to be part of the axonemal radial spoke complexes 1 or 2. Expressed in ependymal cells (at protein level).

It localises to the cytoplasm. The protein localises to the cytoskeleton. It is found in the cilium axoneme. The protein resides in the cell projection. Its subcellular location is the cilium. It localises to the flagellum. In terms of biological role, may function as part of the axonemal radial spoke complex 3 (RS3). Radial spoke complexes are important for ciliary motility. The sequence is that of Radial spoke head 10 homolog B from Mus musculus (Mouse).